The following is a 725-amino-acid chain: Antigen peptide transporter 1 (725 aa).

Residues 1-8 (MAAHAWPT) are Cytoplasmic-facing. Residues 9 to 29 (AALLLLLVDWLLLRPVLPGIF) form a helical membrane-spanning segment. The Lumenal portion of the chain corresponds to 30 to 38 (SLLVPEVPL). The helical transmembrane segment at 39–60 (LRVWAVGLSRWAILGLGVRGVL) threads the bilayer. Residues 61–67 (GVTAGAR) are Cytoplasmic-facing. A helical membrane pass occupies residues 68–88 (GWLAALQPLVAALGLALPGLA). The Lumenal segment spans residues 89–110 (SFRKLSAWGALREGDNAGLLHW). A helical membrane pass occupies residues 111 to 131 (NSRLDAFVLSYVAALPAAALW). The Cytoplasmic portion of the chain corresponds to 132-163 (HKLGGFWAPSGHKGAGDMLCRMLGFLDSKKGR). The chain crosses the membrane as a helical span at residues 164–184 (LHLVLVLLILSCLGEMAIPFF). The ABC transmembrane type-1 domain occupies 164 to 447 (LHLVLVLLIL…LLSIYPSMQK (284 aa)). At 185 to 204 (TGRITDWILQDKTAPSFARN) the chain is on the lumenal side. A helical transmembrane segment spans residues 205-225 (MWLMCILTIASTVLEFAGDGI). Residues 226 to 275 (YNITMGHMHSRVHGEVFRAVLHQETGFFLKNPTGSITSRVTEDTSNVCES) are Cytoplasmic-facing. A helical transmembrane segment spans residues 276–296 (ISDKLNLFLWYLGRGLCLLAF). Residues 297–305 (MIWGSFYLT) lie on the Lumenal side of the membrane. The chain crosses the membrane as a helical span at residues 306-326 (VVTLLSLPLLFLLPRRLGKVY). Residues 327 to 395 (QSLAVKVQES…VTEVWTMSVS (69 aa)) lie on the Cytoplasmic side of the membrane. A part of the peptide-binding site region spans residues 352 to 397 (PTVRSFANEEGEAQKFRQKLEEMKPLNKKEALAYVTEVWTMSVSGM). Residues 396–416 (GMLLKVGILYLGGQLVVRGAV) form a helical membrane-spanning segment. Residues 417–420 (SSGN) are Lumenal-facing. A helical transmembrane segment spans residues 421 to 441 (LVSFVLYQLQFTRAVEVLLSI). The interval 430–464 (QFTRAVEVLLSIYPSMQKSVGASEKIFEYLDRTPC) is part of the peptide-binding site. Residues 442–725 (YPSMQKSVGA…MVEALAAPSD (284 aa)) are Cytoplasmic-facing. The ABC transporter domain maps to 480–719 (VKFQDVSFAY…GGCYRSMVEA (240 aa)). ATP is bound by residues 515–523 (GPNGSGKST), 618–624 (NQLSGGQ), and glutamine 678. Serine 522 contacts Mg(2+).

This sequence belongs to the ABC transporter superfamily. ABCB family. MHC peptide exporter (TC 3.A.1.209) subfamily. Heterodimer of TAP1 and TAP2 (TAP1-TAP2). A component of the peptide loading complex (PLC), interacts via TAPBP with MHCI heterodimer; this interaction mediates peptide-MHCI assembly. Interacts with PSMB5 and PSMB8. Requires Mg(2+) as cofactor.

It localises to the endoplasmic reticulum membrane. The catalysed reaction is a peptide antigen(in) + ATP + H2O = a peptide antigen(out) + ADP + phosphate + H(+). Its function is as follows. ABC transporter associated with antigen processing. In complex with TAP2 mediates unidirectional translocation of peptide antigens from cytosol to endoplasmic reticulum (ER) for loading onto MHC class I (MHCI) molecules. Uses the chemical energy of ATP to export peptides against the concentration gradient. During the transport cycle alternates between 'inward-facing' state with peptide binding site facing the cytosol to 'outward-facing' state with peptide binding site facing the ER lumen. Peptide antigen binding to ATP-loaded TAP1-TAP2 induces a switch to hydrolysis-competent 'outward-facing' conformation ready for peptide loading onto nascent MHCI molecules. Subsequently ATP hydrolysis resets the transporter to the 'inward facing' state for a new cycle. As a component of the peptide loading complex (PLC), acts as a molecular scaffold essential for peptide-MHCI assembly and antigen presentation. The protein is Antigen peptide transporter 1 (Tap1) of Rattus norvegicus (Rat).